Reading from the N-terminus, the 256-residue chain is Beta-fibrinogenase-like (256 aa).

Positions 1–18 are cleaved as a signal peptide; sequence MVLIKVLANLLVLQLSYA. A propeptide spanning residues 19–24 is cleaved from the precursor; the sequence is QKSSEL. One can recognise a Peptidase S1 domain in the interval 25-247; that stretch reads VVGGDECNIN…YTDWIQSIIA (223 aa). 6 disulfides stabilise this stretch: Cys-31-Cys-161, Cys-49-Cys-65, Cys-96-Cys-254, Cys-140-Cys-208, Cys-172-Cys-187, and Cys-198-Cys-223. Asn-44 carries an N-linked (GlcNAc...) asparagine glycan. The active-site Charge relay system is the His-64. N-linked (GlcNAc...) asparagine glycans are attached at residues Asn-78 and Asn-101. The active-site Charge relay system is the Asp-108. N-linked (GlcNAc...) asparagine glycosylation occurs at Asn-152. Ser-202 (charge relay system) is an active-site residue.

It belongs to the peptidase S1 family. Snake venom subfamily. As to quaternary structure, monomer. As to expression, expressed by the venom gland.

Its subcellular location is the secreted. In terms of biological role, snake venom serine protease that has fibrinogenolytic activities by hydrolyzing the beta chain of fibrinogen (FGB). Typical arginine esterase which hydrolyzes esters and amides of arginine. This Daboia siamensis (Eastern Russel's viper) protein is Beta-fibrinogenase-like.